The chain runs to 123 residues: Small ribosomal subunit protein uS12cz/uS12cy (123 aa).

Belongs to the universal ribosomal protein uS12 family. In terms of assembly, part of the 30S ribosomal subunit.

The protein resides in the plastid. It localises to the chloroplast. In terms of biological role, with S4 and S5 plays an important role in translational accuracy. Located at the interface of the 30S and 50S subunits. In Drimys granadensis, this protein is Small ribosomal subunit protein uS12cz/uS12cy (rps12-A).